The sequence spans 439 residues: FAD-linked oxidoreductase phmC (439 aa).

Positions 1-19 (MLSSILLTIFCAFLSSTGA) are cleaved as a signal peptide. Residues Asn-29 and Asn-84 are each glycosylated (N-linked (GlcNAc...) asparagine). The FAD-binding PCMH-type domain maps to 89 to 272 (QGSVPSYYIQ…LSTTTRVEPK (184 aa)). N-linked (GlcNAc...) asparagine glycans are attached at residues Asn-285 and Asn-300.

It belongs to the oxygen-dependent FAD-linked oxidoreductase family. Requires FAD as cofactor.

Its pathway is mycotoxin biosynthesis. Functionally, FAD-linked oxidoreductase; part of the gene cluster that mediates the biosynthesis of the mycotoxins phomacins, leucine-derived cytochalasans with potent actin polymerization-inhibitory activities and monocot-specific antigerminative activities. The first step in the pathway is catalyzed by the hybrid PKS-NRPS phmA, assisted by the enoyl reductase phmE, that are responsible for fusion of the leucine precursor and the polyketide backbone to produce a 2-pyrrolidone intermediate. The polyketide synthase module (PKS) of phmA is responsible for the synthesis of the polyketide backbone and the downstream nonribosomal peptide synthetase (NRPS) amidates the carboxyl end of the polyketide with the leucine precursor. Because phmA lacks a designated enoylreductase (ER) domain, the required activity is provided the enoyl reductase phmE. Reduction by the hydrolyase phmG, followed by dehydration and intra-molecular Diels-Alder cyclization by the Diels-Alderase phmD then yield the required isoindolone-fused macrocycle. A number of oxidative steps catalyzed by the tailoring cytochrome P450 monooxygenase phmB, the FAD-linked oxidoreductase phmC and the short-chain dehydrogenase/reductase phmF, are further required to afford the final products, phomacin D and phomacin E. The polypeptide is FAD-linked oxidoreductase phmC (Phaeosphaeria nodorum (strain SN15 / ATCC MYA-4574 / FGSC 10173) (Glume blotch fungus)).